A 127-amino-acid polypeptide reads, in one-letter code: Fluoride-specific ion channel FluC (127 aa).

A run of 4 helical transmembrane segments spans residues 4–24 (LLLA…FLSM), 35–55 (LGTL…LAWF), 71–91 (TGFC…VFLL), and 103–123 (IAVN…LFSA). Na(+) is bound by residues Gly75 and Thr78.

The protein belongs to the fluoride channel Fluc/FEX (TC 1.A.43) family.

The protein resides in the cell inner membrane. The enzyme catalyses fluoride(in) = fluoride(out). With respect to regulation, na(+) is not transported, but it plays an essential structural role and its presence is essential for fluoride channel function. Its function is as follows. Fluoride-specific ion channel. Important for reducing fluoride concentration in the cell, thus reducing its toxicity. This Enterobacter sp. (strain 638) protein is Fluoride-specific ion channel FluC.